The sequence spans 314 residues: Probable carboxylesterase 2 (314 aa).

Residues 79–81 carry the Involved in the stabilization of the negatively charged intermediate by the formation of the oxyanion hole motif; the sequence is HGG. Catalysis depends on residues Ser-158, Asp-254, and His-286.

It belongs to the 'GDXG' lipolytic enzyme family. As to expression, expressed in roots and flowers.

The catalysed reaction is a carboxylic ester + H2O = an alcohol + a carboxylate + H(+). Functionally, carboxylesterase acting on esters with varying acyl chain length. The sequence is that of Probable carboxylesterase 2 (CXE2) from Arabidopsis thaliana (Mouse-ear cress).